We begin with the raw amino-acid sequence, 628 residues long: MSSSSSKPVNTGLVTPRRYSTMTGIRTGPSQSGTGSIPYSPTSPLSRNFSNYSIPMLRSNSTQTNVNGPTAFDLGVTEKLMSPGTLDRYTRPALYPSKDLDYLKNEYVNYESTTSQQTNSKGLKESNFVGSGIITSIRIRPIGKNQGVWSHGKLSNDPYGREYIRQQTSTSSSTIQQEYLFNNVFGMESKNYDIYKRSVKSVVRNVFSGYNGIVFAYGMTGTGKTYSMQGTENEPGIIPLAMNDLFEMVENNSDDDTFQIRISYLEIYNERIRDLIGNSDEEPRIRENASGEVNVTPLTRVLVTSPEEVSQVIEQCNAIRKTAATDFNTYSSRSHAILQVFLIRNNPTAHTSQISSLSLVDLAGSERASAHHERRKEGAFINKSLLTLGTVISRLSAAANPSLTSNSGHIPYRESKLTRLLQQSLSGQSQISLLATISIESNHTMETTNTLKFASRAQNLPQDIRQAEAVTNVQAELASLHSALEKNAQEVEYYASLVKQLTSDLEERDTYIAMLEAERSQGTAISRARLRMEELLSDHNFEIADLRDELQDKEQIIYALRYAQKQRDIADFNQSLAKFPHKILKKNVTRGSRSSSDQFSNETKTEILPDDQQQSKKDSVTQETQLLS.

The interval 2–122 (SSSSSKPVNT…TTSQQTNSKG (121 aa)) is interaction with mal3. S82 carries the post-translational modification Phosphoserine. The region spanning 132-460 (GIITSIRIRP…LKFASRAQNL (329 aa)) is the Kinesin motor domain. 218–225 (GMTGTGKT) is an ATP binding site. Residues 530-557 (LRMEELLSDHNFEIADLRDELQDKEQII) adopt a coiled-coil conformation. The segment at 588–628 (VTRGSRSSSDQFSNETKTEILPDDQQQSKKDSVTQETQLLS) is disordered. Positions 589–602 (TRGSRSSSDQFSNE) are enriched in polar residues. Residues 603–620 (TKTEILPDDQQQSKKDSV) are compositionally biased toward basic and acidic residues.

It belongs to the TRAFAC class myosin-kinesin ATPase superfamily. Kinesin family. In terms of assembly, interacts with mal3 and tip1.

It localises to the cytoplasm. The protein localises to the cytoskeleton. In terms of biological role, promotes microtubule growth, possibly through interactions with the microtubule end, and is important for establishing and maintaining polarized growth along the long axis of the cell. Acts as a kinesin motor protein that moves along microtubules and is required for proper localization of tea1 and tip1 to the cell tips and microtubules, respectively. ATPase activity stimulated via interaction with mal3. In Schizosaccharomyces pombe (strain 972 / ATCC 24843) (Fission yeast), this protein is Kinesin-like protein tea2.